A 204-amino-acid chain; its full sequence is Molybdenum cofactor guanylyltransferase (204 aa).

Residues 10–12 (LAG), K23, N51, D69, and D99 contribute to the GTP site. D99 is a binding site for Mg(2+).

This sequence belongs to the MobA family. Monomer. It depends on Mg(2+) as a cofactor.

It is found in the cytoplasm. The enzyme catalyses Mo-molybdopterin + GTP + H(+) = Mo-molybdopterin guanine dinucleotide + diphosphate. Functionally, transfers a GMP moiety from GTP to Mo-molybdopterin (Mo-MPT) cofactor (Moco or molybdenum cofactor) to form Mo-molybdopterin guanine dinucleotide (Mo-MGD) cofactor. The sequence is that of Molybdenum cofactor guanylyltransferase from Shewanella piezotolerans (strain WP3 / JCM 13877).